The primary structure comprises 333 residues: Putative ketol-acid reductoisomerase 2 (333 aa).

Positions 1–182 (MDKTVLDANL…AIPGGIAVIS (182 aa)) constitute a KARI N-terminal Rossmann domain. The region spanning 183–329 (SFEEEALLDL…KELYKLLGRK (147 aa)) is the KARI C-terminal knotted domain.

Belongs to the ketol-acid reductoisomerase family.

It catalyses the reaction (2R)-2,3-dihydroxy-3-methylbutanoate + NADP(+) = (2S)-2-acetolactate + NADPH + H(+). The enzyme catalyses (2R,3R)-2,3-dihydroxy-3-methylpentanoate + NADP(+) = (S)-2-ethyl-2-hydroxy-3-oxobutanoate + NADPH + H(+). Its pathway is amino-acid biosynthesis; L-isoleucine biosynthesis; L-isoleucine from 2-oxobutanoate: step 2/4. It participates in amino-acid biosynthesis; L-valine biosynthesis; L-valine from pyruvate: step 2/4. The sequence is that of Putative ketol-acid reductoisomerase 2 (ilvC2) from Saccharolobus solfataricus (strain ATCC 35092 / DSM 1617 / JCM 11322 / P2) (Sulfolobus solfataricus).